Reading from the N-terminus, the 1663-residue chain is Cortactin-binding protein 2 (1663 aa).

Disordered stretches follow at residues 1 to 23, 203 to 222, 352 to 440, 454 to 478, and 498 to 616; these read MATDGASCEPDLSRAPEDAAGAA, KKKTNELEEELSTEKRRSTE, ARPG…LHPG, GNANDPDQNGNTTQSPPSRDVSPTS, and RFTS…PKPS. The stretch at 119-276 forms a coiled coil; sequence KKMQERMSAQ…EQLKRGSDSK (158 aa). Over residues 384 to 396 the composition is skewed to low complexity; it reads NGPSTGSTPDPTS. Residues 411–422 show a composition bias toward polar residues; sequence QTPGIAPQNSQA. Arg498 bears the Asymmetric dimethylarginine mark. A compositionally biased stretch (polar residues) spans 583-593; it reads TVASPPSSLPQ. ANK repeat units lie at residues 709–739, 743–772, 776–805, 809–838, and 842–871; these read GRPTLLQQAAAQGNVTLLSMLLNEEGLDINY, DGHSALYSAAKNGHTDCVRLLLSAEAQVNA, NGFTPLCAAAAQGHFECVELLIAYDANINH, GGQTPLYLACKNGNKECIKLLLEAGTNRSV, and DGWTPVHAAVDTGNVDSLKLLMYHRILARG. Residues 876–897 form a disordered region; the sequence is EEGSESSVFDLDGGEESPEGIS. The ANK 6 repeat unit spans residues 912–942; the sequence is EGWTAAHIAASKGFKNCLEILCRHGGLEPER. Residues 1446–1485 are disordered; the sequence is NKKKGESGAWRKVNTSPRRKSGRFSLPTWNKPDLSTEGMK. Ser1524 carries the phosphoserine modification. 2 disordered regions span residues 1580–1602 and 1615–1663; these read SQKEVSPLSSHQTTECSNSKSKT and VPRS…KPNK. Residues 1582-1599 show a composition bias toward polar residues; that stretch reads KEVSPLSSHQTTECSNSK. Positions 1624-1638 are enriched in low complexity; the sequence is SQNTKRSSSSSNTRQ. Positions 1645-1663 are enriched in basic and acidic residues; the sequence is SKEENWNLHKNEHLEKPNK.

As to quaternary structure, interacts with CTTN/cortactin SH3 domain. Interacts with STRN, STRN4/zinedin and MOB4/phocein; this interactions mediate the association with the STRIPAK core complex and may regulate dendritic spine distribution of the STRIPAK complex in hippocampal neurons. Activation of glutamate receptors weakens the interaction with STRN and STRN4.

It localises to the cytoplasm. The protein localises to the cell cortex. The protein resides in the cell projection. Its subcellular location is the dendritic spine. In terms of biological role, regulates the dendritic spine distribution of CTTN/cortactin in hippocampal neurons, and thus controls dendritic spinogenesis and dendritic spine maintenance. Associates with the striatin-interacting phosphatase and kinase (STRIPAK) core complex to regulate dendritic spine distribution of the STRIPAK complex in hippocampal neurons. This is Cortactin-binding protein 2 (CTTNBP2) from Nomascus leucogenys (Northern white-cheeked gibbon).